Consider the following 108-residue polypeptide: Thiosulfate sulfurtransferase GlpE (108 aa).

In terms of domain architecture, Rhodanese spans 17–105 (HQGAAVLVDI…WHRHFPADVA (89 aa)). The active-site Cysteine persulfide intermediate is cysteine 65.

The protein belongs to the GlpE family.

Its subcellular location is the cytoplasm. The catalysed reaction is thiosulfate + hydrogen cyanide = thiocyanate + sulfite + 2 H(+). It carries out the reaction thiosulfate + [thioredoxin]-dithiol = [thioredoxin]-disulfide + hydrogen sulfide + sulfite + 2 H(+). In terms of biological role, transferase that catalyzes the transfer of sulfur from thiosulfate to thiophilic acceptors such as cyanide or dithiols. May function in a CysM-independent thiosulfate assimilation pathway by catalyzing the conversion of thiosulfate to sulfite, which can then be used for L-cysteine biosynthesis. In Salmonella arizonae (strain ATCC BAA-731 / CDC346-86 / RSK2980), this protein is Thiosulfate sulfurtransferase GlpE.